The sequence spans 168 residues: Probable chemoreceptor glutamine deamidase CheD 2 (168 aa).

This sequence belongs to the CheD family.

The catalysed reaction is L-glutaminyl-[protein] + H2O = L-glutamyl-[protein] + NH4(+). Probably deamidates glutamine residues to glutamate on methyl-accepting chemotaxis receptors (MCPs), playing an important role in chemotaxis. The protein is Probable chemoreceptor glutamine deamidase CheD 2 of Leptospira interrogans serogroup Icterohaemorrhagiae serovar copenhageni (strain Fiocruz L1-130).